We begin with the raw amino-acid sequence, 152 residues long: Heavy metal-associated isoprenylated plant protein 20 (152 aa).

The HMA domain occupies 27–90 (MQTVNIKVKM…RIERTGKKAE (64 aa)). Residues cysteine 38 and cysteine 41 each coordinate Cd(2+). Cysteine 149 is subject to Cysteine methyl ester. A lipid anchor (S-farnesyl cysteine) is attached at cysteine 149. Positions 150 to 152 (TVM) are cleaved as a propeptide — removed in mature form.

Belongs to the HIPP family. As to quaternary structure, interacts with ZHD11/HB29. In terms of tissue distribution, expressed in roots, shoot apical meristem, leaves and flowers.

The protein localises to the membrane. Heavy-metal-binding protein. Binds cadmium. May be involved in cadmium transport and play a role in cadmium detoxification. This is Heavy metal-associated isoprenylated plant protein 20 from Arabidopsis thaliana (Mouse-ear cress).